The sequence spans 361 residues: Porphobilinogen deaminase (361 aa).

Position 2 is an N-acetylserine (S2). At S69 the chain carries Phosphoserine. Position 74 is an N6-acetyllysine (K74). S147 bears the Phosphoserine mark. At C261 the chain carries S-(dipyrrolylmethanemethyl)cysteine.

It belongs to the HMBS family. Monomer. The cofactor is dipyrromethane.

It localises to the cytoplasm. It is found in the cytosol. The catalysed reaction is 4 porphobilinogen + H2O = hydroxymethylbilane + 4 NH4(+). Its pathway is porphyrin-containing compound metabolism; protoporphyrin-IX biosynthesis; coproporphyrinogen-III from 5-aminolevulinate: step 2/4. Functionally, as part of the heme biosynthetic pathway, catalyzes the sequential polymerization of four molecules of porphobilinogen to form hydroxymethylbilane, also known as preuroporphyrinogen. Catalysis begins with the assembly of the dipyrromethane cofactor by the apoenzyme from two molecules of porphobilinogen or from preuroporphyrinogen. The covalently linked cofactor acts as a primer, around which the tetrapyrrole product is assembled. In the last step of catalysis, the product, preuroporphyrinogen, is released, leaving the cofactor bound to the holodeaminase intact. This is Porphobilinogen deaminase (HMBS) from Bos taurus (Bovine).